Consider the following 923-residue polypeptide: Protocadherin gamma-B5 (923 aa).

An N-terminal signal peptide occupies residues 1–30; that stretch reads MGRGTGELGRAERLPVLFLFLLSLFCPALC. 6 consecutive Cadherin domains span residues 31 to 133, 134 to 242, 243 to 343, 344 to 448, 449 to 558, and 566 to 671; these read EQIR…TPKF, TQNS…PPVF, NRDV…SPEV, TFHS…APVF, HQAS…APRV, and DGSA…LPDI. The Extracellular portion of the chain corresponds to 31–687; it reads EQIRYRIPEE…SDPQAELQFY (657 aa). N-linked (GlcNAc...) asparagine glycans are attached at residues asparagine 415 and asparagine 541. The helical transmembrane segment at 688–708 threads the bilayer; it reads LVVALALISVLFLLAVILAIA. Residues 709–923 are Cytoplasmic-facing; that stretch reads LRLRRSSSPA…KKKSGKKEKK (215 aa). Disordered stretches follow at residues 794-832 and 893-923; these read TSHP…WPNN and ATLT…KEKK. A compositionally biased stretch (polar residues) spans 807-832; it reads WRFSQAQRPGTSGSQNGDDTGTWPNN. Residues 913–923 are compositionally biased toward basic residues; that stretch reads NKKKSGKKEKK.

The protein resides in the cell membrane. Functionally, potential calcium-dependent cell-adhesion protein. May be involved in the establishment and maintenance of specific neuronal connections in the brain. In Pan troglodytes (Chimpanzee), this protein is Protocadherin gamma-B5 (PCDHGB5).